The primary structure comprises 142 residues: MVLSAADKSNVKAAWGKVGGNAGAYGAEALERMFLSFPTTKTYFPHFDLSHGSAQVKGHGEKVAAALTKAVGHLDDLPGTLSDLSDLHAHKLRVDPVNFKLLSHSLLVTLACHLPNDFTPAVHASLDKFLANVSTVLTSKYR.

The region spanning 2 to 142 (VLSAADKSNV…VSTVLTSKYR (141 aa)) is the Globin domain. His-59 lines the O2 pocket. His-88 lines the heme b pocket.

The protein belongs to the globin family. As to quaternary structure, heterotetramer of two alpha chains and two beta chains.

In terms of biological role, involved in oxygen transport from the lung to the various peripheral tissues. Its function is as follows. Hemopressin acts as an antagonist peptide of the cannabinoid receptor CNR1. Hemopressin-binding efficiently blocks cannabinoid receptor CNR1 and subsequent signaling. This Capra hircus (Goat) protein is Hemoglobin subunit alpha-1 (HBA1).